The chain runs to 412 residues: Glutamyl-tRNA reductase (412 aa).

Substrate contacts are provided by residues 52-55, Ser108, 113-115, and Gln119; these read TCNR and EYE. Cys53 serves as the catalytic Nucleophile. 189–194 contributes to the NADP(+) binding site; it reads GAGEIG.

This sequence belongs to the glutamyl-tRNA reductase family. In terms of assembly, homodimer.

The catalysed reaction is (S)-4-amino-5-oxopentanoate + tRNA(Glu) + NADP(+) = L-glutamyl-tRNA(Glu) + NADPH + H(+). The protein operates within porphyrin-containing compound metabolism; protoporphyrin-IX biosynthesis; 5-aminolevulinate from L-glutamyl-tRNA(Glu): step 1/2. Catalyzes the NADPH-dependent reduction of glutamyl-tRNA(Glu) to glutamate 1-semialdehyde (GSA). The chain is Glutamyl-tRNA reductase from Sulfurisphaera tokodaii (strain DSM 16993 / JCM 10545 / NBRC 100140 / 7) (Sulfolobus tokodaii).